We begin with the raw amino-acid sequence, 637 residues long: Threonine--tRNA ligase (637 aa).

The 61-residue stretch at Met-1 to Thr-61 folds into the TGS domain. The interval Asp-244–Pro-535 is catalytic. Zn(2+)-binding residues include Cys-335, His-386, and His-512.

Belongs to the class-II aminoacyl-tRNA synthetase family. As to quaternary structure, homodimer. The cofactor is Zn(2+).

The protein localises to the cytoplasm. The enzyme catalyses tRNA(Thr) + L-threonine + ATP = L-threonyl-tRNA(Thr) + AMP + diphosphate + H(+). Functionally, catalyzes the attachment of threonine to tRNA(Thr) in a two-step reaction: L-threonine is first activated by ATP to form Thr-AMP and then transferred to the acceptor end of tRNA(Thr). Also edits incorrectly charged L-seryl-tRNA(Thr). This Thiobacillus denitrificans (strain ATCC 25259 / T1) protein is Threonine--tRNA ligase.